The primary structure comprises 790 residues: Sodium- and chloride-dependent glycine transporter 2 (790 aa).

Residues 1-39 (MDYVNVVDGSKKTMNSPEGAAPGLIGATGITNPTPDNDL) form a disordered region. The Cytoplasmic portion of the chain corresponds to 1 to 192 (MDYVNVVDGS…ARGNWSNKLD (192 aa)). The next 3 membrane-spanning stretches (helical) occupy residues 193–213 (FILSMVGYAVGLGNVWRFPYL), 220–240 (GAFLIPYLTMLALAGLPIFYL), and 264–284 (GCGIAMLIISVLIAIYYNIIM). Glycine 199, alanine 201, valine 202, and asparagine 206 together coordinate Na(+). The Extracellular segment spans residues 285–387 (CYTIFYLFAS…GIEYPGEIRW (103 aa)). A disulfide bridge connects residues cysteine 304 and cysteine 313. 4 N-linked (GlcNAc...) asparagine glycosylation sites follow: asparagine 336, asparagine 346, asparagine 351, and asparagine 357. 3 helical membrane-spanning segments follow: residues 388–408 (PLVFCLFLAWIIVYASLAKGI), 427–447 (VILLFRGVTLPGAGDGIWWFI), and 463–483 (AATQIFFSLSAAWGGLITLSS). Residues serine 470 and asparagine 502 each contribute to the Na(+) site. Helical transmembrane passes span 504–524 (ATSIFAGFVIFSVIGFMAHIL), 556–576 (WAIIFFLMLLTLGLDTMFATI), 597–617 (LFTLVCCVAFFIMGFPMITQG), 631–651 (SYSLVIIAIFELVGISYIYGL), 672–692 (ICWAFVTPTILTFILGFSFYQ), and 708–728 (MVMGWLMLACSVIWIPIMFVI). Na(+)-binding residues include leucine 567 and aspartate 570. Residues 729 to 790 (KMFLAPGTFI…PKDFELGTQC (62 aa)) are Cytoplasmic-facing.

The protein belongs to the sodium:neurotransmitter symporter (SNF) (TC 2.A.22) family. SLC6A5 subfamily. In terms of tissue distribution, first expressed in late neurula stages in the anterior spinal cord, where expression intensifies through the tailbud stages, and by hatching, expression is seen in the hindbrain. During late hatching stages, expression extends along most of the length of the spinal cord, mildly intensifies in the hindbrain, and appears in localized regions of the lateral forebrain and medial midbrain. By the swimming tadpole stage, weak expression appears in the anterior hindbrain, with stronger expression in the posterior, postmitotic neurons.

Its subcellular location is the cell membrane. The enzyme catalyses glycine(out) + chloride(out) + 3 Na(+)(out) = glycine(in) + chloride(in) + 3 Na(+)(in). Its function is as follows. Sodium- and chloride-dependent glycine transporter. Terminates the action of glycine by its high affinity sodium-dependent reuptake into presynaptic terminals. May be responsible for the termination of neurotransmission at strychnine-sensitive glycinergic synapses. The protein is Sodium- and chloride-dependent glycine transporter 2 of Xenopus laevis (African clawed frog).